The chain runs to 612 residues: Serine/threonine-protein kinase Nek1 (612 aa).

One can recognise a Protein kinase domain in the interval 4-258 (YEFLEQIGKG…ASDLLRHPHL (255 aa)). ATP is bound by residues 10-18 (IGKGSFGSA) and K33. D129 serves as the catalytic Proton acceptor. The span at 503–513 (ISDGSSSSDQN) shows a compositional bias: polar residues. The interval 503–534 (ISDGSSSSDQNATAGASSHTTSSSSRRCRFDP) is disordered. Positions 514-527 (ATAGASSHTTSSSS) are enriched in low complexity.

It belongs to the protein kinase superfamily. NEK Ser/Thr protein kinase family. NIMA subfamily.

The enzyme catalyses L-seryl-[protein] + ATP = O-phospho-L-seryl-[protein] + ADP + H(+). The catalysed reaction is L-threonyl-[protein] + ATP = O-phospho-L-threonyl-[protein] + ADP + H(+). May be involved in plant development processes. This Arabidopsis thaliana (Mouse-ear cress) protein is Serine/threonine-protein kinase Nek1 (NEK1).